Here is a 460-residue protein sequence, read N- to C-terminus: Cysteine--tRNA ligase (460 aa).

Zn(2+) is bound at residue Cys28. The 'HIGH' region motif lies at 30 to 40 (MTVYDYCHLGH). Cys209, His234, and Glu238 together coordinate Zn(2+). Positions 266–270 (KMSKS) match the 'KMSKS' region motif. Lys269 contacts ATP.

It belongs to the class-I aminoacyl-tRNA synthetase family. As to quaternary structure, monomer. Requires Zn(2+) as cofactor.

The protein resides in the cytoplasm. It catalyses the reaction tRNA(Cys) + L-cysteine + ATP = L-cysteinyl-tRNA(Cys) + AMP + diphosphate. The polypeptide is Cysteine--tRNA ligase (Pseudomonas savastanoi pv. phaseolicola (strain 1448A / Race 6) (Pseudomonas syringae pv. phaseolicola (strain 1448A / Race 6))).